The sequence spans 188 residues: HTH-type transcriptional regulator QacR (188 aa).

The HTH tetR-type domain maps to 1 to 61 (MNLKDKILGV…EILNIEESKW (61 aa)). The H-T-H motif DNA-binding region spans 24–43 (TTGEIVKLSESSKGNLYYHF).

Homodimer. Binds cooperatively to DNA as a pair of dimers.

Functionally, transcriptional repressor of qacA. Binds to IR1, an unusually long 28 bp operator, which is located downstream from the qacA promoter and overlaps its transcription start site. QacR is induced from its IR1 site by binding to one of many structurally dissimilar cationic lipophilic compounds, which are also substrates of QacA. This is HTH-type transcriptional regulator QacR (qacR) from Staphylococcus aureus (strain Mu50 / ATCC 700699).